The primary structure comprises 251 residues: 2,3-bisphosphoglycerate-dependent phosphoglycerate mutase (251 aa).

Residues 11–18 (RHGNSDWN), 24–25 (TG), R63, 90–93 (ERHY), K101, 117–118 (RR), and 185–186 (GN) each bind substrate. Catalysis depends on H12, which acts as the Tele-phosphohistidine intermediate. Catalysis depends on E90, which acts as the Proton donor/acceptor. The tract at residues 117-142 (RRSFDVPPPPIDDDDEYSQSRDPRYA) is disordered.

It belongs to the phosphoglycerate mutase family. BPG-dependent PGAM subfamily.

The catalysed reaction is (2R)-2-phosphoglycerate = (2R)-3-phosphoglycerate. It participates in carbohydrate degradation; glycolysis; pyruvate from D-glyceraldehyde 3-phosphate: step 3/5. Catalyzes the interconversion of 2-phosphoglycerate and 3-phosphoglycerate. The protein is 2,3-bisphosphoglycerate-dependent phosphoglycerate mutase of Clavibacter michiganensis subsp. michiganensis (strain NCPPB 382).